We begin with the raw amino-acid sequence, 204 residues long: MSETLHLSAETRDRAGKGASRALRREGRTPAVIYGGNEEPVAIHLEEKALVKALGTGHFFNSVVELTVGGQTVRTLPKDVAFHPVTDRPEHADFLRVSKDSVVHVNVPVIFANEEKSPGLKKGGVLNIVRHELELVCAPDAIPDDIVIDVAGYEVGDSIHISAVKLPAGVKSAITDRDFTIATIVAPSSLKSEEGDTTKTDAEG.

The tract at residues 1 to 23 is disordered; the sequence is MSETLHLSAETRDRAGKGASRAL.

This sequence belongs to the bacterial ribosomal protein bL25 family. CTC subfamily. In terms of assembly, part of the 50S ribosomal subunit; part of the 5S rRNA/L5/L18/L25 subcomplex. Contacts the 5S rRNA. Binds to the 5S rRNA independently of L5 and L18.

Functionally, this is one of the proteins that binds to the 5S RNA in the ribosome where it forms part of the central protuberance. This Novosphingobium aromaticivorans (strain ATCC 700278 / DSM 12444 / CCUG 56034 / CIP 105152 / NBRC 16084 / F199) protein is Large ribosomal subunit protein bL25.